The following is a 143-amino-acid chain: Large ribosomal subunit protein uL13 (143 aa).

The protein belongs to the universal ribosomal protein uL13 family. Part of the 50S ribosomal subunit.

In terms of biological role, this protein is one of the early assembly proteins of the 50S ribosomal subunit, although it is not seen to bind rRNA by itself. It is important during the early stages of 50S assembly. The chain is Large ribosomal subunit protein uL13 from Coprothermobacter proteolyticus (strain ATCC 35245 / DSM 5265 / OCM 4 / BT).